Reading from the N-terminus, the 29-residue chain is Cytochrome c oxidase subunit 7A2, mitochondrial (29 aa).

Position 10 is an N6-acetyllysine (Lys-10).

This sequence belongs to the cytochrome c oxidase VIIa family. In terms of assembly, component of the cytochrome c oxidase (complex IV, CIV), a multisubunit enzyme composed of 14 subunits. The complex is composed of a catalytic core of 3 subunits MT-CO1, MT-CO2 and MT-CO3, encoded in the mitochondrial DNA, and 11 supernumerary subunits COX4I, COX5A, COX5B, COX6A, COX6B, COX6C, COX7A, COX7B, COX7C, COX8 and NDUFA4, which are encoded in the nuclear genome. The complex exists as a monomer or a dimer and forms supercomplexes (SCs) in the inner mitochondrial membrane with NADH-ubiquinone oxidoreductase (complex I, CI) and ubiquinol-cytochrome c oxidoreductase (cytochrome b-c1 complex, complex III, CIII), resulting in different assemblies (supercomplex SCI(1)III(2)IV(1) and megacomplex MCI(2)III(2)IV(2)). Interacts with PET100.

It localises to the mitochondrion inner membrane. The protein operates within energy metabolism; oxidative phosphorylation. Component of the cytochrome c oxidase, the last enzyme in the mitochondrial electron transport chain which drives oxidative phosphorylation. The respiratory chain contains 3 multisubunit complexes succinate dehydrogenase (complex II, CII), ubiquinol-cytochrome c oxidoreductase (cytochrome b-c1 complex, complex III, CIII) and cytochrome c oxidase (complex IV, CIV), that cooperate to transfer electrons derived from NADH and succinate to molecular oxygen, creating an electrochemical gradient over the inner membrane that drives transmembrane transport and the ATP synthase. Cytochrome c oxidase is the component of the respiratory chain that catalyzes the reduction of oxygen to water. Electrons originating from reduced cytochrome c in the intermembrane space (IMS) are transferred via the dinuclear copper A center (CU(A)) of subunit 2 and heme A of subunit 1 to the active site in subunit 1, a binuclear center (BNC) formed by heme A3 and copper B (CU(B)). The BNC reduces molecular oxygen to 2 water molecules using 4 electrons from cytochrome c in the IMS and 4 protons from the mitochondrial matrix. This chain is Cytochrome c oxidase subunit 7A2, mitochondrial (COX7A2), found in Canis lupus familiaris (Dog).